The sequence spans 355 residues: UDP-N-acetylglucosamine--N-acetylmuramyl-(pentapeptide) pyrophosphoryl-undecaprenol N-acetylglucosamine transferase (355 aa).

UDP-N-acetyl-alpha-D-glucosamine-binding positions include 12–14 (TGG), Asn124, Arg163, Ser191, Ile243, 262–267 (ALTVAE), and Gln288.

It belongs to the glycosyltransferase 28 family. MurG subfamily.

The protein resides in the cell inner membrane. The enzyme catalyses di-trans,octa-cis-undecaprenyl diphospho-N-acetyl-alpha-D-muramoyl-L-alanyl-D-glutamyl-meso-2,6-diaminopimeloyl-D-alanyl-D-alanine + UDP-N-acetyl-alpha-D-glucosamine = di-trans,octa-cis-undecaprenyl diphospho-[N-acetyl-alpha-D-glucosaminyl-(1-&gt;4)]-N-acetyl-alpha-D-muramoyl-L-alanyl-D-glutamyl-meso-2,6-diaminopimeloyl-D-alanyl-D-alanine + UDP + H(+). Its pathway is cell wall biogenesis; peptidoglycan biosynthesis. Cell wall formation. Catalyzes the transfer of a GlcNAc subunit on undecaprenyl-pyrophosphoryl-MurNAc-pentapeptide (lipid intermediate I) to form undecaprenyl-pyrophosphoryl-MurNAc-(pentapeptide)GlcNAc (lipid intermediate II). The sequence is that of UDP-N-acetylglucosamine--N-acetylmuramyl-(pentapeptide) pyrophosphoryl-undecaprenol N-acetylglucosamine transferase from Tolumonas auensis (strain DSM 9187 / NBRC 110442 / TA 4).